The chain runs to 422 residues: Carboxypeptidase B2 (422 aa).

The signal sequence occupies residues 1–21 (MKLHGLGILVAIILYEQHGFA). A propeptide spans 22–113 (FQSGQVLSAL…QTFNDTVSPR (92 aa)) (activation peptide). 4 N-linked (GlcNAc...) asparagine glycosylation sites follow: Asn43, Asn72, Asn84, and Asn107. The Peptidase M14 domain maps to 121–418 (QYHSLNEIYS…AAISKIVWHV (298 aa)). Residues Cys177 and Cys190 are joined by a disulfide bond. Zn(2+) contacts are provided by His180 and Glu183. Residues 180 to 183 (HARE) and Arg238 contribute to the substrate site. N-linked (GlcNAc...) asparagine glycosylation occurs at Asn240. Cystine bridges form between Cys249–Cys273 and Cys264–Cys278. 255-256 (NR) contacts substrate. His309 lines the Zn(2+) pocket. 310 to 311 (SY) is a substrate binding site. N-linked (GlcNAc...) asparagine glycosylation is present at Asn322. Residue Tyr362 participates in substrate binding. Glu384 serves as the catalytic Proton donor/acceptor.

It belongs to the peptidase M14 family. Requires Zn(2+) as cofactor. As to expression, plasma; synthesized in the liver.

It is found in the secreted. It catalyses the reaction Release of C-terminal Arg and Lys from a polypeptide.. TAFI/CPB2 is unique among carboxypeptidases in that it spontaneously inactivates with a short half-life, a property that is crucial for its role in controlling blood clot lysis. The zymogen is stabilized by interactions with the activation peptide. Release of the activation peptide increases a dynamic flap mobility and in time this leads to conformational changes that disrupt the catalytic site and expose a cryptic thrombin-cleavage site present at Arg-323. Cleaves C-terminal arginine or lysine residues from biologically active peptides such as kinins or anaphylatoxins in the circulation thereby regulating their activities. Down-regulates fibrinolysis by removing C-terminal lysine residues from fibrin that has already been partially degraded by plasmin. In Mus musculus (Mouse), this protein is Carboxypeptidase B2 (Cpb2).